A 471-amino-acid chain; its full sequence is N-succinylglutamate 5-semialdehyde dehydrogenase (471 aa).

NAD(+) is bound at residue 207–212 (GSAHAG). Active-site residues include E230 and C264.

The protein belongs to the aldehyde dehydrogenase family. AstD subfamily.

It carries out the reaction N-succinyl-L-glutamate 5-semialdehyde + NAD(+) + H2O = N-succinyl-L-glutamate + NADH + 2 H(+). It participates in amino-acid degradation; L-arginine degradation via AST pathway; L-glutamate and succinate from L-arginine: step 4/5. Its function is as follows. Catalyzes the NAD-dependent reduction of succinylglutamate semialdehyde into succinylglutamate. The polypeptide is N-succinylglutamate 5-semialdehyde dehydrogenase (Novosphingobium aromaticivorans (strain ATCC 700278 / DSM 12444 / CCUG 56034 / CIP 105152 / NBRC 16084 / F199)).